The primary structure comprises 327 residues: uncharacterized protein (327 aa).

A disordered region spans residues 12 to 31 (PLGTTKSYHMNTSTVSPPSP). 2 helical membrane-spanning segments follow: residues 183-203 (VSSPSVEVYIAGCCGGVPVIL) and 292-312 (VGVGIGLGMCLGVGIGVGLLM).

The protein resides in the membrane. This is an uncharacterized protein from Arabidopsis thaliana (Mouse-ear cress).